Here is a 115-residue protein sequence, read N- to C-terminus: Large ribosomal subunit protein bL19 (115 aa).

This sequence belongs to the bacterial ribosomal protein bL19 family.

Functionally, this protein is located at the 30S-50S ribosomal subunit interface and may play a role in the structure and function of the aminoacyl-tRNA binding site. In Lactobacillus acidophilus (strain ATCC 700396 / NCK56 / N2 / NCFM), this protein is Large ribosomal subunit protein bL19.